The primary structure comprises 337 residues: Glutathione transferase 3 (337 aa).

Topologically, residues 1–239 are cytoplasmic; it reads MPTKSTFSRW…NKYQYTLDFC (239 aa). Phosphoserine occurs at positions 66, 72, 99, and 116. A disordered region spans residues 66-95; it reads SMTVDQSKDERNEYGSGSGNGSGSGSCDTA. Residues 107-132 form a disordered region; that stretch reads KEDDDEKPQSGDETSATKPLSSRNAN. The segment covering 117–132 has biased composition (polar residues); the sequence is GDETSATKPLSSRNAN. A helical membrane pass occupies residues 240–260; sequence LPILTWLLFFRGIPTLVSYYI. Topologically, residues 261–313 are perinuclear space; that stretch reads NFIRYDLNIELDPMTFNLTKFLISLAIFKTCNNKNIDFHSFRCVNQLWTQLCT. A helical transmembrane segment spans residues 314 to 336; sequence VNRSLGMVPLVFSMVSCLLTLYV. Leucine 337 is a topological domain (cytoplasmic).

It is found in the nucleus membrane. The chain is Glutathione transferase 3 (GTT3) from Saccharomyces cerevisiae (strain ATCC 204508 / S288c) (Baker's yeast).